Reading from the N-terminus, the 148-residue chain is Deoxyuridine 5'-triphosphate nucleotidohydrolase (148 aa).

Residues 68 to 70 (RSG), Asn-81, 85 to 87 (TID), and Lys-95 each bind substrate.

Belongs to the dUTPase family. Mg(2+) is required as a cofactor.

The enzyme catalyses dUTP + H2O = dUMP + diphosphate + H(+). The protein operates within pyrimidine metabolism; dUMP biosynthesis; dUMP from dCTP (dUTP route): step 2/2. This enzyme is involved in nucleotide metabolism: it produces dUMP, the immediate precursor of thymidine nucleotides and it decreases the intracellular concentration of dUTP so that uracil cannot be incorporated into DNA. The protein is Deoxyuridine 5'-triphosphate nucleotidohydrolase of Rickettsia typhi (strain ATCC VR-144 / Wilmington).